Here is a 148-residue protein sequence, read N- to C-terminus: MLIDADSCPVKTEIYRVMNRYQLKTFVVANRFFPLPDEALLERVVVSDKFDSADDWIVEHVQEASIVITSDIPLAARVVRAGGVCLSPTGRTFDASSIGHVLALRNLMNDLRGQGKVISSPRPFCCKDRSAFLSALDLAVQRLKRCGY.

It belongs to the UPF0178 family.

This is UPF0178 protein BH16190 from Bartonella henselae (strain ATCC 49882 / DSM 28221 / CCUG 30454 / Houston 1) (Rochalimaea henselae).